A 354-amino-acid chain; its full sequence is NADH-quinone oxidoreductase subunit H (354 aa).

8 helical membrane-spanning segments follow: residues 22-42, 91-111, 124-144, 162-182, 203-223, 250-270, 291-311, and 326-346; these read ILIRAVLIVVPVLLCVAYLIL, YLVAPLMVLMPAVAVWAVIPF, LLYVMAISSVGVYGVILAGWA, VSYEIAMGFALVTVLMVSGSL, LLSWNWLPLLPMFGVYFISGV, GMTFALFFLAEYINMIIISTM, IPGFFWLVIKVFLLLSVFIWI, and LGWKIFIPLTVAWLIIVAIWI.

This sequence belongs to the complex I subunit 1 family. NDH-1 is composed of 14 different subunits. Subunits NuoA, H, J, K, L, M, N constitute the membrane sector of the complex.

It localises to the cell inner membrane. The enzyme catalyses a quinone + NADH + 5 H(+)(in) = a quinol + NAD(+) + 4 H(+)(out). NDH-1 shuttles electrons from NADH, via FMN and iron-sulfur (Fe-S) centers, to quinones in the respiratory chain. The immediate electron acceptor for the enzyme in this species is believed to be ubiquinone. Couples the redox reaction to proton translocation (for every two electrons transferred, four hydrogen ions are translocated across the cytoplasmic membrane), and thus conserves the redox energy in a proton gradient. This subunit may bind ubiquinone. The chain is NADH-quinone oxidoreductase subunit H from Cupriavidus metallidurans (strain ATCC 43123 / DSM 2839 / NBRC 102507 / CH34) (Ralstonia metallidurans).